The chain runs to 724 residues: Probable metal-nicotianamine transporter YSL8 (724 aa).

Positions 1-58 are disordered; it reads MRKGGLTPDRDRQIEEHELQETGISPDIERLKRNINATPYQREEEEEDREEQEESVEG. Over residues 8–20 the composition is skewed to basic and acidic residues; sequence PDRDRQIEEHELQ. Serine 25 carries the post-translational modification Phosphoserine. A compositionally biased stretch (acidic residues) spans 43 to 56; that stretch reads EEEEEDREEQEESV. The next 7 helical transmembrane spans lie at 72–92, 96–116, 144–164, 184–204, 245–265, 304–324, and 349–369; these read LTIRAFVVSFALSILFSFIVM, LTTGIIPSLNVSAGLLGFFFV, CVVASSGIAFSGGFGTYLFAM, LGWMIAFLFVVSFLGLFSVVP, VLGKFFSFSFFWGFFQWFFTA, IINISLLLGGILSWGLMWPLI, and VFIAVATILGDGLYNFCKVLI. The interval 386–407 is disordered; sequence RSSLAHKEDPPASPASPLTPRI. Helical transmembrane passes span 423 to 443, 455 to 475, 478 to 497, 501 to 520, 541 to 561, 603 to 623, 641 to 661, and 679 to 699; these read IPSWFAVGGYVVISAVSTAIL, IIVIYIFAPILAFCNAYGAGL, WSLASTYGKLAIFTIGAWAG, GGLLAGLAACGVMMNIVSTA, FVSQVIGTAMGCLVSPCVFWL, LMLCYVFFGVAILINLIKDCL, FFLGPYFAIDMCVGSFILFVW, and GLICGDGIWTLPSSVLAIAGV.

Belongs to the YSL (TC 2.A.67.2) family.

Its subcellular location is the membrane. Its function is as follows. May be involved in the transport of nicotianamine-chelated metals. In Arabidopsis thaliana (Mouse-ear cress), this protein is Probable metal-nicotianamine transporter YSL8 (YSL8).